The primary structure comprises 161 residues: Protein-export protein SecB (161 aa).

Belongs to the SecB family. As to quaternary structure, homotetramer, a dimer of dimers. One homotetramer interacts with 1 SecA dimer.

It is found in the cytoplasm. Functionally, one of the proteins required for the normal export of preproteins out of the cell cytoplasm. It is a molecular chaperone that binds to a subset of precursor proteins, maintaining them in a translocation-competent state. It also specifically binds to its receptor SecA. The polypeptide is Protein-export protein SecB (Coxiella burnetii (strain CbuG_Q212) (Coxiella burnetii (strain Q212))).